The sequence spans 370 residues: UDP-N-acetylglucosamine--N-acetylmuramyl-(pentapeptide) pyrophosphoryl-undecaprenol N-acetylglucosamine transferase (370 aa).

UDP-N-acetyl-alpha-D-glucosamine-binding positions include 10–12 (TGG), Asn-126, Ser-200, Ile-255, and Gln-300.

This sequence belongs to the glycosyltransferase 28 family. MurG subfamily.

The protein localises to the cell membrane. It catalyses the reaction Mur2Ac(oyl-L-Ala-gamma-D-Glu-L-Lys-D-Ala-D-Ala)-di-trans,octa-cis-undecaprenyl diphosphate + UDP-N-acetyl-alpha-D-glucosamine = beta-D-GlcNAc-(1-&gt;4)-Mur2Ac(oyl-L-Ala-gamma-D-Glu-L-Lys-D-Ala-D-Ala)-di-trans,octa-cis-undecaprenyl diphosphate + UDP + H(+). Its pathway is cell wall biogenesis; peptidoglycan biosynthesis. Its function is as follows. Cell wall formation. Catalyzes the transfer of a GlcNAc subunit on undecaprenyl-pyrophosphoryl-MurNAc-pentapeptide (lipid intermediate I) to form undecaprenyl-pyrophosphoryl-MurNAc-(pentapeptide)GlcNAc (lipid intermediate II). This is UDP-N-acetylglucosamine--N-acetylmuramyl-(pentapeptide) pyrophosphoryl-undecaprenol N-acetylglucosamine transferase from Lactobacillus gasseri (strain ATCC 33323 / DSM 20243 / BCRC 14619 / CIP 102991 / JCM 1131 / KCTC 3163 / NCIMB 11718 / NCTC 13722 / AM63).